We begin with the raw amino-acid sequence, 685 residues long: Mannan-binding lectin serine protease 2 (685 aa).

Positions 1-19 are cleaved as a signal peptide; sequence MRLLIVLGLLWSLVATLLG. The region spanning 20-137 is the CUB 1 domain; the sequence is SKWPEPVFGR…TGFEAFYAAE (118 aa). Ca(2+)-binding residues include glutamate 67 and aspartate 75. A disulfide bond links cysteine 72 and cysteine 90. Asparagine 103 is a glycosylation site (N-linked (GlcNAc...) asparagine). Positions 120, 122, 123, 138, and 139 each coordinate Ca(2+). Positions 138–181 constitute an EGF-like; calcium-binding domain; that stretch reads DVDECRTSLGDSVPCDHYCHNYLGGYYCSCRVGYILHQNKHTCS. Cystine bridges form between cysteine 152-cysteine 165, cysteine 167-cysteine 180, cysteine 184-cysteine 211, and cysteine 241-cysteine 259. A (3R)-3-hydroxyasparagine modification is found at asparagine 158. Ca(2+) contacts are provided by tyrosine 159 and glycine 162. The 113-residue stretch at 184-296 folds into the CUB 2 domain; it reads CSGQVFTGRS…TGWKIHYTST (113 aa). A glycan (N-linked (GlcNAc...) asparagine) is linked at asparagine 285. 2 Sushi domains span residues 298–363 and 364–431; these read QPCP…ECSI and IDCG…VCKP. 7 disulfide bridges follow: cysteine 300/cysteine 348, cysteine 328/cysteine 361, cysteine 366/cysteine 411, cysteine 396/cysteine 429, cysteine 433/cysteine 551, cysteine 597/cysteine 617, and cysteine 628/cysteine 659. The Peptidase S1 domain occupies 444–683; the sequence is IIGGQPAKPG…YIPWIENIIN (240 aa). Catalysis depends on charge relay system residues histidine 482 and aspartate 531. Residue serine 632 is the Charge relay system of the active site. N-linked (GlcNAc...) asparagine glycosylation is present at asparagine 641.

Belongs to the peptidase S1 family. In terms of assembly, homodimer; disulfide-linked. Binds MBL2. Isoform 2 binds to MASP1. Binds SERPING1. N-glycosylated. In terms of processing, the iron and 2-oxoglutarate dependent 3-hydroxylation of aspartate and asparagine is (R) stereospecific within EGF domains. In terms of tissue distribution, highly expressed in liver. Secreted in plasma.

It localises to the secreted. It carries out the reaction Selective cleavage after Arg-223 in complement component C2 (-Ser-Leu-Gly-Arg-|-Lys-Ile-Gln-Ile) and after Arg-76 in complement component C4 (-Gly-Leu-Gln-Arg-|-Ala-Leu-Glu-Ile).. Its function is as follows. Serum protease that plays an important role in the activation of the complement system via mannose-binding lectin. After activation by auto-catalytic cleavage it cleaves C2 and C4, leading to their activation and to the formation of C3 convertase. This Rattus norvegicus (Rat) protein is Mannan-binding lectin serine protease 2 (Masp2).